Reading from the N-terminus, the 211-residue chain is Protein-L-isoaspartate O-methyltransferase (211 aa).

The active site involves serine 60.

This sequence belongs to the methyltransferase superfamily. L-isoaspartyl/D-aspartyl protein methyltransferase family.

The protein resides in the cytoplasm. The catalysed reaction is [protein]-L-isoaspartate + S-adenosyl-L-methionine = [protein]-L-isoaspartate alpha-methyl ester + S-adenosyl-L-homocysteine. Catalyzes the methyl esterification of L-isoaspartyl residues in peptides and proteins that result from spontaneous decomposition of normal L-aspartyl and L-asparaginyl residues. It plays a role in the repair and/or degradation of damaged proteins. The protein is Protein-L-isoaspartate O-methyltransferase of Alteromonas mediterranea (strain DSM 17117 / CIP 110805 / LMG 28347 / Deep ecotype).